Consider the following 340-residue polypeptide: MIRGAPAPMAEPPPVIFCHDSPKRVLVSVIRTTPATPPCSSVGEPEPPPPLVPTSPGFSDFMVYPWRWGENAHNVTLSPGAAGGVVSAGLPAATELPTLRGAPPSSASVAAVSGGEDEEEASSPDSGHLKDGIRRGRPRADTVRDLINEGEHSSSRIRCNICNRVFPREKSLQAHKRTHTGERPYLCDYPDCGKAFVQSGQLKTHQRLHTGEKPFVCSENGCLSRFTHANRHCPKHPYARLKREEPTDTLSKHQSTDNKAAAEWLAKYWEMREQRTPTLKGKLVQKADQEQQDPLEYLQSDEEDDEKSGAQRRLQEQRERLHGALALIELANLTGAPLRQ.

Residues 96-140 (LPTLRGAPPSSASVAAVSGGEDEEEASSPDSGHLKDGIRRGRPRA) form a disordered region. Over residues 101-114 (GAPPSSASVAAVSG) the composition is skewed to low complexity. Over residues 127 to 140 (GHLKDGIRRGRPRA) the composition is skewed to basic and acidic residues. 2 consecutive C2H2-type zinc fingers follow at residues 157 to 179 (IRCN…KRTH) and 185 to 209 (YLCD…QRLH). The segment at 280 to 317 (KGKLVQKADQEQQDPLEYLQSDEEDDEKSGAQRRLQEQ) is disordered. Residues 299-332 (QSDEEDDEKSGAQRRLQEQRERLHGALALIELAN) adopt a coiled-coil conformation. Position 300 is a phosphoserine (Ser-300). The segment covering 307 to 317 (KSGAQRRLQEQ) has biased composition (basic and acidic residues).

It belongs to the krueppel C2H2-type zinc-finger protein family.

It localises to the nucleus. Its function is as follows. Transcriptional activator. May be involved in transcriptional activation of erythroid genes. This chain is Zinc finger protein 367 (Znf367), found in Rattus norvegicus (Rat).